The chain runs to 513 residues: MTKKAIISVYNKDGILEFAKELKNLGYEIISTGGTMKYLKENRIDVINISDVTNFPEILDGRVKTLHPNIHAGILAIKDNEEHVKTLNDLNISTIDMVVVNLYPFKETIFRENVAFEDVIENIDIGGPTMLRAAAKNFKYITVIIDPADYGLVLKEIKENGDVSFETRFYLATKVFEYTAYYDSMIFNYFKYIRGDKSFPDYLTVPLETVQKLRYGENPHQQASFYKITLPFIEKSNIANAEQLHGKDLSYNNILDSDSAIELLKEFDEPTCVAIKHNNPCGVASGDNIFEAYKKVYNSDPVSIFGGIVAFNRKVDRQTAEELKKIFLEIVIAPDFDEDALSLLSTKKDLRILKLLTLDKTDVYYDVKSVNGGMLVQEKDRKLLNEDYQVVTERRPTEKEIEDLIFAWKVVKHVKSNAIVIAKDKMTLGIGMGQTNRIWAVEHAISRSRFDLNGAVLASDAFFPFSDSVEAAGKAGITAIIQPGGSIRDKESIDAANKYNIAMIFTGIRHFRH.

The MGS-like domain occupies 1–145 (MTKKAIISVY…KNFKYITVII (145 aa)).

It belongs to the PurH family.

The catalysed reaction is (6R)-10-formyltetrahydrofolate + 5-amino-1-(5-phospho-beta-D-ribosyl)imidazole-4-carboxamide = 5-formamido-1-(5-phospho-D-ribosyl)imidazole-4-carboxamide + (6S)-5,6,7,8-tetrahydrofolate. The enzyme catalyses IMP + H2O = 5-formamido-1-(5-phospho-D-ribosyl)imidazole-4-carboxamide. It participates in purine metabolism; IMP biosynthesis via de novo pathway; 5-formamido-1-(5-phospho-D-ribosyl)imidazole-4-carboxamide from 5-amino-1-(5-phospho-D-ribosyl)imidazole-4-carboxamide (10-formyl THF route): step 1/1. Its pathway is purine metabolism; IMP biosynthesis via de novo pathway; IMP from 5-formamido-1-(5-phospho-D-ribosyl)imidazole-4-carboxamide: step 1/1. The protein is Bifunctional purine biosynthesis protein PurH of Caldicellulosiruptor saccharolyticus (strain ATCC 43494 / DSM 8903 / Tp8T 6331).